The following is a 273-amino-acid chain: 4-hydroxy-tetrahydrodipicolinate reductase (273 aa).

NAD(+) contacts are provided by residues 11–16 (GALGRM), 102–104 (GTT), and 126–129 (SPNF). Histidine 159 serves as the catalytic Proton donor/acceptor. A (S)-2,3,4,5-tetrahydrodipicolinate-binding site is contributed by histidine 160. The active-site Proton donor is lysine 163. 169-170 (GT) provides a ligand contact to (S)-2,3,4,5-tetrahydrodipicolinate.

The protein belongs to the DapB family. As to quaternary structure, homotetramer.

The protein localises to the cytoplasm. It carries out the reaction (S)-2,3,4,5-tetrahydrodipicolinate + NAD(+) + H2O = (2S,4S)-4-hydroxy-2,3,4,5-tetrahydrodipicolinate + NADH + H(+). The enzyme catalyses (S)-2,3,4,5-tetrahydrodipicolinate + NADP(+) + H2O = (2S,4S)-4-hydroxy-2,3,4,5-tetrahydrodipicolinate + NADPH + H(+). It participates in amino-acid biosynthesis; L-lysine biosynthesis via DAP pathway; (S)-tetrahydrodipicolinate from L-aspartate: step 4/4. Its function is as follows. Catalyzes the conversion of 4-hydroxy-tetrahydrodipicolinate (HTPA) to tetrahydrodipicolinate. The protein is 4-hydroxy-tetrahydrodipicolinate reductase of Buchnera aphidicola subsp. Cinara cedri (strain Cc).